Consider the following 30-residue polypeptide: Matrix Gla protein (30 aa).

3 positions are modified to phosphoserine: Ser-2, Ser-3, and Ser-5.

This sequence belongs to the osteocalcin/matrix Gla protein family. Requires vitamin K-dependent gamma-carboxylation for its function.

The protein resides in the secreted. Its function is as follows. Associates with the organic matrix of calcified cartilage. The protein is Matrix Gla protein (mgp) of Prionace glauca (Blue shark).